The primary structure comprises 236 residues: Eukaryotic translation initiation factor 3 subunit K (236 aa).

The PCI domain maps to 48–218 (CDCNANRTLL…EAKKAEIRED (171 aa)).

Belongs to the eIF-3 subunit K family.

It is found in the cytoplasm. In terms of biological role, component of the eukaryotic translation initiation factor 3 (eIF-3) complex, which is involved in protein synthesis of a specialized repertoire of mRNAs and, together with other initiation factors, stimulates binding of mRNA and methionyl-tRNAi to the 40S ribosome. The eIF-3 complex specifically targets and initiates translation of a subset of mRNAs involved in cell proliferation. The chain is Eukaryotic translation initiation factor 3 subunit K from Pyricularia oryzae (strain Y34) (Rice blast fungus).